Here is a 657-residue protein sequence, read N- to C-terminus: ABC1 family protein YPL109C, mitochondrial (657 aa).

The transit peptide at Met-1–Tyr-15 directs the protein to the mitochondrion.

This sequence belongs to the protein kinase superfamily. ADCK protein kinase family.

Its subcellular location is the mitochondrion. The chain is ABC1 family protein YPL109C, mitochondrial from Saccharomyces cerevisiae (strain ATCC 204508 / S288c) (Baker's yeast).